The sequence spans 156 residues: Ribosome maturation factor RimP (156 aa).

This sequence belongs to the RimP family.

It localises to the cytoplasm. Its function is as follows. Required for maturation of 30S ribosomal subunits. This chain is Ribosome maturation factor RimP, found in Gloeobacter violaceus (strain ATCC 29082 / PCC 7421).